A 418-amino-acid polypeptide reads, in one-letter code: Protein-lysine 6-oxidase (418 aa).

Positions 1-20 (MRFAWTALLGSLQLCALVRC) are cleaved as a signal peptide. A propeptide spans 21-169 (APPAASHRQP…NRVEVDGMVG (149 aa)) (removed by BMP1). The interval 63-84 (YQPQRRRDPGATAPGAANATAP) is disordered. A compositionally biased stretch (low complexity) spans 72-84 (GATAPGAANATAP). 3 N-linked (GlcNAc...) asparagine glycosylation sites follow: N80, N96, and N143. The segment at 130-175 (TSGAHDAGTSRADNQTAPGEVPTLSNLRPPNRVEVDGMVGDDPYNP) is disordered. Positions 140–157 (RADNQTAPGEVPTLSNLR) are enriched in polar residues. A Sulfotyrosine modification is found at Y188. The lysyl-oxidase like stretch occupies residues 214 to 418 (PDLVPDPYYI…YASGCTISPY (205 aa)). Disulfide bonds link C239/C245, C292/C341, C325/C331, C352/C362, and C399/C413. The Cu cation site is built by H293, H295, and H297. The lysine tyrosylquinone (Lys-Tyr) cross-link spans 321–356 (KASFCLEDTSCDYGYHRRFACTAHTQGLSPGCYDTY). Y356 is subject to 2',4',5'-topaquinone.

This sequence belongs to the lysyl oxidase family. As to quaternary structure, interacts with MFAP4. Interacts (via propeptide) with EFEMP2; this interaction is strong and facilitates formation of ternary complexes with ELN during elastic fiber assembly; this interaction limits interaction of EFEMP2 with FBLN5. Requires Cu cation as cofactor. It depends on lysine tyrosylquinone residue as a cofactor. Post-translationally, the lysine tyrosylquinone cross-link (LTQ) is generated by condensation of the epsilon-amino group of a lysine with a topaquinone produced by oxidation of tyrosine. In terms of processing, proteolytically cleaved by BMP1 which removes the propeptide. Also proteolytically cleaved by ADAMTS2 and ADAMTS14, but not by ADAMTS3, at an additional cleavage site downstream of the BMP1 cleavage site. The propeptide plays a role in directing the deposition of this enzyme to elastic fibers, via interaction with tropoelastin. Cleavage by BMP1 to remove the propeptide does not increase enzymatic activity but increases binding to collagen. Cleavage by ADAMTS2 produces a form with reduced collagen-binding activity. Sulfated at Tyr-188 and also at either Tyr-184 or Tyr-185 which enhances binding to collagen.

It is found in the secreted. Its subcellular location is the extracellular space. It carries out the reaction L-lysyl-[protein] + O2 + H2O = (S)-2-amino-6-oxohexanoyl-[protein] + H2O2 + NH4(+). Responsible for the post-translational oxidative deamination of peptidyl lysine residues in precursors to fibrous collagen and elastin. Regulator of Ras expression. May play a role in tumor suppression. Plays a role in the aortic wall architecture. The polypeptide is Protein-lysine 6-oxidase (Bos taurus (Bovine)).